The following is a 683-amino-acid chain: Long-chain-fatty-acid--CoA ligase 5 (683 aa).

Residues 12-32 traverse the membrane as a helical; Signal-anchor for type III membrane protein segment; sequence LPTPALICLLTFGTAIFLWLI. Residues 33–683 are Cytoplasmic-facing; the sequence is NRPQPVLPLI…IKSLYESIEE (651 aa). An N6-acetyllysine modification is found at lysine 361.

It belongs to the ATP-dependent AMP-binding enzyme family. In terms of tissue distribution, expressed most abundantly in the small intestine, and to a much lesser extent in the lung, liver, adrenal gland, adipose tissue and kidney.

It is found in the mitochondrion. The protein localises to the endoplasmic reticulum. It localises to the mitochondrion outer membrane. The protein resides in the endoplasmic reticulum membrane. Its subcellular location is the cell membrane. It catalyses the reaction a long-chain fatty acid + ATP + CoA = a long-chain fatty acyl-CoA + AMP + diphosphate. The enzyme catalyses (5Z,8Z,11Z,14Z)-eicosatetraenoate + ATP + CoA = (5Z,8Z,11Z,14Z)-eicosatetraenoyl-CoA + AMP + diphosphate. The catalysed reaction is 15-hydroxy-(5Z,8Z,11Z,13E)-eicosatetraenoate + ATP + CoA = 15-hydroxy-(5Z,8Z,11Z,13E)-eicosatetraenoyl-CoA + AMP + diphosphate. It carries out the reaction 12-hydroxy-(5Z,8Z,10E,14Z)-eicosatetraenoate + ATP + CoA = 12-hydroxy-(5Z,8Z,10E,14Z)-eicosatetraenoyl-CoA + AMP + diphosphate. It catalyses the reaction 5-hydroxy-(6E,8Z,11Z,14Z)-eicosatetraenoate + ATP + CoA = 5-hydroxy-(6E,8Z,11Z,14Z)-eicosatetraenoyl-CoA + AMP + diphosphate. The enzyme catalyses 14,15-epoxy-(5Z,8Z,11Z)-eicosatrienoate + ATP + CoA = 14,15-epoxy-(5Z,8Z,11Z)-eicosatrienoyl-CoA + AMP + diphosphate. The catalysed reaction is 11,12-epoxy-(5Z,8Z,14Z)-eicosatrienoate + ATP + CoA = 11,12-epoxy-(5Z,8Z,14Z)-eicosatrienoyl-CoA + AMP + diphosphate. It carries out the reaction hexadecanoate + ATP + CoA = hexadecanoyl-CoA + AMP + diphosphate. It catalyses the reaction (E)-hexadec-2-enoate + ATP + CoA = (2E)-hexadecenoyl-CoA + AMP + diphosphate. The enzyme catalyses (9Z)-octadecenoate + ATP + CoA = (9Z)-octadecenoyl-CoA + AMP + diphosphate. In terms of biological role, catalyzes the conversion of long-chain fatty acids to their active form acyl-CoAs for both synthesis of cellular lipids, and degradation via beta-oxidation. ACSL5 may sensitize epithelial cells to apoptosis specifically triggered by the death ligand TRAIL at the villus tip of the crypt-villus axis of the small intestine. May have a role in the survival of glioma cells. May activate fatty acids from exogenous sources for the synthesis of triacylglycerol destined for intracellular storage. It was suggested that it may also stimulate fatty acid oxidation. Utilizes a wide range of saturated fatty acids with a preference for C16-C18 unsaturated fatty acids. The chain is Long-chain-fatty-acid--CoA ligase 5 from Rattus norvegicus (Rat).